Reading from the N-terminus, the 66-residue chain is Large ribosomal subunit protein uL29 (66 aa).

This sequence belongs to the universal ribosomal protein uL29 family.

The sequence is that of Large ribosomal subunit protein uL29 from Thermosipho africanus (strain TCF52B).